Reading from the N-terminus, the 383-residue chain is Polyketide synthase 4 (383 aa).

Cysteine 164 (nucleophile and monoketide coumarate intermediate) is an active-site residue.

This sequence belongs to the thiolase-like superfamily. Chalcone/stilbene synthases family. Homodimer. In terms of tissue distribution, expressed in fruits.

The catalysed reaction is 4-coumaroyl-CoA + malonyl-CoA + H2O + H(+) = 4-hydroxybenzalacetone + 2 CO2 + 2 CoA. It carries out the reaction (E)-4-coumaroyl-CoA + 3 malonyl-CoA + 3 H(+) = 2',4,4',6'-tetrahydroxychalcone + 3 CO2 + 4 CoA. It participates in secondary metabolite biosynthesis; flavonoid biosynthesis. Inhibited by glutathione. Its function is as follows. Bifunctional polyketide synthase producing both 4-hydroxybenzalacetone and naringenin chalcone. Can use p-coumaryl-CoA and ferulyl-CoA as substrates. Catalyzes the initial key reaction step in the biosynthesis of phenylbutanoids. The polypeptide is Polyketide synthase 4 (PKS4) (Rubus idaeus (Raspberry)).